The following is a 638-amino-acid chain: Threonine--tRNA ligase (638 aa).

The TGS domain occupies 1–61 (MPVITLPDGS…SVDGKLQIIT (61 aa)). The interval 243-534 (DHRKIGKTQD…LTEEYAGFFP (292 aa)) is catalytic. 3 residues coordinate Zn(2+): Cys-334, His-385, and His-511.

The protein belongs to the class-II aminoacyl-tRNA synthetase family. As to quaternary structure, homodimer. Zn(2+) is required as a cofactor.

It localises to the cytoplasm. It catalyses the reaction tRNA(Thr) + L-threonine + ATP = L-threonyl-tRNA(Thr) + AMP + diphosphate + H(+). Catalyzes the attachment of threonine to tRNA(Thr) in a two-step reaction: L-threonine is first activated by ATP to form Thr-AMP and then transferred to the acceptor end of tRNA(Thr). Also edits incorrectly charged L-seryl-tRNA(Thr). The polypeptide is Threonine--tRNA ligase (Hamiltonella defensa subsp. Acyrthosiphon pisum (strain 5AT)).